Consider the following 209-residue polypeptide: Pyridoxine/pyridoxamine 5'-phosphate oxidase (209 aa).

Substrate is bound by residues 7 to 10 (REDY) and Lys-64. Residues 59 to 64 (RIVLLK), 74 to 75 (FT), Arg-80, and Lys-81 each bind FMN. Residues Tyr-121, Arg-125, and Ser-129 each coordinate substrate. FMN contacts are provided by residues 138–139 (QS) and Trp-182. 188–190 (RLH) lines the substrate pocket. Arg-192 contacts FMN.

Belongs to the pyridoxamine 5'-phosphate oxidase family. Homodimer. FMN serves as cofactor.

The catalysed reaction is pyridoxamine 5'-phosphate + O2 + H2O = pyridoxal 5'-phosphate + H2O2 + NH4(+). It carries out the reaction pyridoxine 5'-phosphate + O2 = pyridoxal 5'-phosphate + H2O2. Its pathway is cofactor metabolism; pyridoxal 5'-phosphate salvage; pyridoxal 5'-phosphate from pyridoxamine 5'-phosphate: step 1/1. It functions in the pathway cofactor metabolism; pyridoxal 5'-phosphate salvage; pyridoxal 5'-phosphate from pyridoxine 5'-phosphate: step 1/1. Its function is as follows. Catalyzes the oxidation of either pyridoxine 5'-phosphate (PNP) or pyridoxamine 5'-phosphate (PMP) into pyridoxal 5'-phosphate (PLP). This Actinobacillus pleuropneumoniae serotype 3 (strain JL03) protein is Pyridoxine/pyridoxamine 5'-phosphate oxidase.